A 221-amino-acid polypeptide reads, in one-letter code: U1 small nuclear ribonucleoprotein C (221 aa).

A Matrin-type zinc finger spans residues 4–36 (YFCDYCDTYLTHDSPSVRKTHCNGRKHKENVRV). The segment at 100 to 168 (SNPFPTSQAG…PPGAPTLPQP (69 aa)) is disordered. Pro residues predominate over residues 134-166 (APAPPRMPGPLLMTPPPGAAAPGMAPPGAPTLP).

It belongs to the U1 small nuclear ribonucleoprotein C family. U1 snRNP is composed of the 7 core Sm proteins B/B', D1, D2, D3, E, F and G that assemble in a heptameric protein ring on the Sm site of the small nuclear RNA to form the core snRNP, and at least 3 U1 snRNP-specific proteins U1-70K, U1-A and U1-C. U1-C interacts with U1 snRNA and the 5' splice-site region of the pre-mRNA.

The protein resides in the nucleus. Its function is as follows. Component of the spliceosomal U1 snRNP, which is essential for recognition of the pre-mRNA 5' splice-site and the subsequent assembly of the spliceosome. U1-C is directly involved in initial 5' splice-site recognition for both constitutive and regulated alternative splicing. The interaction with the 5' splice-site seems to precede base-pairing between the pre-mRNA and the U1 snRNA. Stimulates commitment or early (E) complex formation by stabilizing the base pairing of the 5' end of the U1 snRNA and the 5' splice-site region. The chain is U1 small nuclear ribonucleoprotein C from Branchiostoma floridae (Florida lancelet).